Reading from the N-terminus, the 299-residue chain is dTDP-4-dehydrorhamnose reductase (299 aa).

NADH contacts are provided by residues 10-12, Asp-30, 39-40, and 63-65; these read GQV, DF, and AHT. 11-12 lines the NADPH pocket; it reads QV. NADPH is bound by residues 39-40, 63-65, and Tyr-102; these read DF and AHT. 104–105 provides a ligand contact to dTDP-beta-L-rhamnose; sequence TD. Residues Tyr-128 and Lys-132 each coordinate NADH. Tyr-128 and Lys-132 together coordinate NADPH. The active-site Proton donor/acceptor is the Tyr-128. Trp-153 is a dTDP-beta-L-rhamnose binding site.

This sequence belongs to the dTDP-4-dehydrorhamnose reductase family. Homodimer. The cofactor is Mg(2+).

The catalysed reaction is dTDP-beta-L-rhamnose + NADP(+) = dTDP-4-dehydro-beta-L-rhamnose + NADPH + H(+). The protein operates within carbohydrate biosynthesis; dTDP-L-rhamnose biosynthesis. It functions in the pathway bacterial outer membrane biogenesis; LPS O-antigen biosynthesis. Involved in the biosynthesis of the dTDP-L-rhamnose which is an important component of lipopolysaccharide (LPS). Catalyzes the reduction of dTDP-6-deoxy-L-lyxo-4-hexulose to yield dTDP-L-rhamnose. RmlD uses NADH and NADPH nearly equally well. The sequence is that of dTDP-4-dehydrorhamnose reductase (rfbD) from Salmonella typhimurium (strain LT2 / SGSC1412 / ATCC 700720).